The following is a 138-amino-acid chain: Small ribosomal subunit protein uS11c (138 aa).

Residues methionine 1–valine 22 are disordered.

Belongs to the universal ribosomal protein uS11 family. As to quaternary structure, part of the 30S ribosomal subunit.

It is found in the plastid. The sequence is that of Small ribosomal subunit protein uS11c from Cuscuta exaltata (Tall dodder).